We begin with the raw amino-acid sequence, 784 residues long: E3 UFM1-protein ligase 1 homolog (784 aa).

Residues 405 to 480 (SVSTQELEDD…RGGGAGNKKA (76 aa)) are disordered. Positions 444–454 (KSTKKHQRGKA) are enriched in basic residues.

Belongs to the UFL1 family.

Functionally, E3 UFM1-protein ligase that mediates ufmylation of target proteins. This is E3 UFM1-protein ligase 1 homolog from Drosophila yakuba (Fruit fly).